A 153-amino-acid chain; its full sequence is 6,7-dimethyl-8-ribityllumazine synthase (153 aa).

5-amino-6-(D-ribitylamino)uracil-binding positions include Phe21, Ala55–Glu57, and Cys79–Ile81. Ala84–Thr85 lines the (2S)-2-hydroxy-3-oxobutyl phosphate pocket. The Proton donor role is filled by His87. Phe112 provides a ligand contact to 5-amino-6-(D-ribitylamino)uracil. Arg126 is a binding site for (2S)-2-hydroxy-3-oxobutyl phosphate.

The protein belongs to the DMRL synthase family. As to quaternary structure, forms an icosahedral capsid composed of 60 subunits, arranged as a dodecamer of pentamers.

The catalysed reaction is (2S)-2-hydroxy-3-oxobutyl phosphate + 5-amino-6-(D-ribitylamino)uracil = 6,7-dimethyl-8-(1-D-ribityl)lumazine + phosphate + 2 H2O + H(+). Its pathway is cofactor biosynthesis; riboflavin biosynthesis; riboflavin from 2-hydroxy-3-oxobutyl phosphate and 5-amino-6-(D-ribitylamino)uracil: step 1/2. In terms of biological role, catalyzes the formation of 6,7-dimethyl-8-ribityllumazine by condensation of 5-amino-6-(D-ribitylamino)uracil with 3,4-dihydroxy-2-butanone 4-phosphate. This is the penultimate step in the biosynthesis of riboflavin. This Staphylococcus epidermidis (strain ATCC 35984 / DSM 28319 / BCRC 17069 / CCUG 31568 / BM 3577 / RP62A) protein is 6,7-dimethyl-8-ribityllumazine synthase.